We begin with the raw amino-acid sequence, 427 residues long: Large ribosomal subunit protein uL4 (427 aa).

The residue at position 2 (Ala-2) is an N-acetylalanine. At Lys-14 the chain carries N6-acetyllysine. An Omega-N-methylarginine modification is found at Arg-97. Residue Lys-106 is modified to N6-acetyllysine. Lys-239 participates in a covalent cross-link: Glycyl lysine isopeptide (Lys-Gly) (interchain with G-Cter in SUMO2). At Lys-259 the chain carries N6-acetyllysine. Thr-266 carries the post-translational modification Phosphothreonine. Residues Ser-290 and Ser-295 each carry the phosphoserine modification. Arg-300 carries the post-translational modification Citrulline. Lys-327 participates in a covalent cross-link: Glycyl lysine isopeptide (Lys-Gly) (interchain with G-Cter in SUMO2). 2 positions are modified to N6-acetyllysine: Lys-333 and Lys-353. The residue at position 364 (Lys-364) is an N6-acetyllysine; alternate. Residue Lys-364 forms a Glycyl lysine isopeptide (Lys-Gly) (interchain with G-Cter in SUMO1); alternate linkage. The residue at position 365 (Ser-365) is a Phosphoserine. The tract at residues Ala-369–Ala-427 is disordered. Residues Val-377–Val-397 are compositionally biased toward basic residues. Basic and acidic residues predominate over residues Pro-407–Ala-427.

This sequence belongs to the universal ribosomal protein uL4 family. As to quaternary structure, component of the large ribosomal subunit. May bind IPO9 with low affinity. Interacts with RBM3. Post-translationally, citrullinated by PADI4.

The protein resides in the cytoplasm. In terms of biological role, component of the large ribosomal subunit. The ribosome is a large ribonucleoprotein complex responsible for the synthesis of proteins in the cell. The protein is Large ribosomal subunit protein uL4 (RPL4) of Homo sapiens (Human).